The chain runs to 918 residues: Cell surface glycoprotein 1 (918 aa).

The first 34 residues, 1-34 (MTDTNEKIRSLFLTALMVFSVFAGTIAFSGGAAA), serve as a signal peptide directing secretion. Residues asparagine 37, asparagine 56, asparagine 110, asparagine 219, asparagine 250, asparagine 261, and asparagine 291 are each glycosylated (N-linked (GlcNAc...) asparagine). A glycan (N-linked (GalNAc...) asparagine) is linked at asparagine 306. N-linked (GlcNAc...) asparagine glycans are attached at residues asparagine 318, asparagine 343, asparagine 392, asparagine 434, asparagine 487, asparagine 541, asparagine 555, asparagine 572, asparagine 585, asparagine 614, asparagine 715, asparagine 776, asparagine 836, and asparagine 845. The tract at residues 815-894 (HQDTNGNEAY…DESETTAAEG (80 aa)) is disordered. Over residues 833–846 (YTQNGSAVTDSANV) the composition is skewed to polar residues. A compositionally biased stretch (acidic residues) spans 849–875 (VEEEQTEAPDTETETEAPDTETEEETD). The helical transmembrane segment at 894–914 (GPGFTAAIALIALVAAALLAV) threads the bilayer. The short motif at 895–897 (PGF) is the PGF sorting signal element.

This sequence belongs to the halobacterial S-layer protein family. In terms of processing, N-glycosylated on Asn-306; this N-linked glycan is a branched trisaccharide containing 2-amino-6-sulfo-2,6-dideoxy-glucose (sulfoquinovosamine). Post-translationally, cleaved by the archaeosortase ArtA at the C-terminus, with removal of a short hydrophobic segment. Lipidation.

Its subcellular location is the secreted. It is found in the cell wall. It localises to the S-layer. The protein resides in the cell membrane. In terms of biological role, S-layer protein. The S-layer is a paracrystalline mono-layered assembly of proteins which coat the surface of the cell. In H.hispanica, the S-layer contains two different glycoproteins, Slg1 and Slg2, which share highly similar amino acid sequences. The chain is Cell surface glycoprotein 1 from Haloarcula hispanica (strain ATCC 33960 / DSM 4426 / JCM 8911 / NBRC 102182 / NCIMB 2187 / VKM B-1755).